The chain runs to 252 residues: tRNA (guanine-N(7)-)-methyltransferase (252 aa).

Residues E51, D76, N103, and D125 each contribute to the S-adenosyl-L-methionine site. D125 is a catalytic residue. Residues K129, D159, and 199–202 (TYYE) contribute to the substrate site.

This sequence belongs to the class I-like SAM-binding methyltransferase superfamily. TrmB family.

The catalysed reaction is guanosine(46) in tRNA + S-adenosyl-L-methionine = N(7)-methylguanosine(46) in tRNA + S-adenosyl-L-homocysteine. It functions in the pathway tRNA modification; N(7)-methylguanine-tRNA biosynthesis. Functionally, catalyzes the formation of N(7)-methylguanine at position 46 (m7G46) in tRNA. This chain is tRNA (guanine-N(7)-)-methyltransferase, found in Bacteroides thetaiotaomicron (strain ATCC 29148 / DSM 2079 / JCM 5827 / CCUG 10774 / NCTC 10582 / VPI-5482 / E50).